Here is a 512-residue protein sequence, read N- to C-terminus: Cytochrome P450 1A2 (512 aa).

S65 carries an O-linked (GlcNAc) serine glycan. F222 lines the substrate pocket. C454 contacts heme.

This sequence belongs to the cytochrome P450 family. Interacts with PGRMC1; the interaction requires PGRMC1 homodimerization. Requires heme as cofactor. Constitutively expressed in liver.

It localises to the endoplasmic reticulum membrane. The protein resides in the microsome membrane. It carries out the reaction an organic molecule + reduced [NADPH--hemoprotein reductase] + O2 = an alcohol + oxidized [NADPH--hemoprotein reductase] + H2O + H(+). The enzyme catalyses 17beta-estradiol + reduced [NADPH--hemoprotein reductase] + O2 = 2-hydroxy-17beta-estradiol + oxidized [NADPH--hemoprotein reductase] + H2O + H(+). It catalyses the reaction 17beta-estradiol + reduced [NADPH--hemoprotein reductase] + O2 = 4-hydroxy-17beta-estradiol + oxidized [NADPH--hemoprotein reductase] + H2O + H(+). The catalysed reaction is estrone + reduced [NADPH--hemoprotein reductase] + O2 = 2-hydroxyestrone + oxidized [NADPH--hemoprotein reductase] + H2O + H(+). It carries out the reaction estrone + reduced [NADPH--hemoprotein reductase] + O2 = 4-hydroxyestrone + oxidized [NADPH--hemoprotein reductase] + H2O + H(+). The enzyme catalyses cholesterol + reduced [NADPH--hemoprotein reductase] + O2 = 25-hydroxycholesterol + oxidized [NADPH--hemoprotein reductase] + H2O + H(+). It catalyses the reaction all-trans-retinol + reduced [NADPH--hemoprotein reductase] + O2 = all-trans-retinal + oxidized [NADPH--hemoprotein reductase] + 2 H2O + H(+). The catalysed reaction is all-trans-retinal + reduced [NADPH--hemoprotein reductase] + O2 = all-trans-retinoate + oxidized [NADPH--hemoprotein reductase] + H2O + 2 H(+). It carries out the reaction (5Z,8Z,11Z,14Z)-eicosatetraenoate + reduced [NADPH--hemoprotein reductase] + O2 = (14R,15S)-epoxy-(5Z,8Z,11Z)-eicosatrienoate + oxidized [NADPH--hemoprotein reductase] + H2O + H(+). The enzyme catalyses (5Z,8Z,11Z,14Z)-eicosatetraenoate + reduced [NADPH--hemoprotein reductase] + O2 = (14S,15R)-epoxy-(5Z,8Z,11Z)-eicosatrienoate + oxidized [NADPH--hemoprotein reductase] + H2O + H(+). It catalyses the reaction (5Z,8Z,11Z,14Z,17Z)-eicosapentaenoate + reduced [NADPH--hemoprotein reductase] + O2 = (17R,18S)-epoxy-(5Z,8Z,11Z,14Z)-eicosatetraenoate + oxidized [NADPH--hemoprotein reductase] + H2O + H(+). The catalysed reaction is (4Z,7Z,10Z,13Z,16Z,19Z)-docosahexaenoate + reduced [NADPH--hemoprotein reductase] + O2 = (19R,20S)-epoxy-(4Z,7Z,10Z,13Z,16Z)-docosapentaenoate + oxidized [NADPH--hemoprotein reductase] + H2O + H(+). It carries out the reaction (5S)-hydroperoxy-(6E,8Z,11Z,14Z)-eicosatetraenoate = 5-oxo-(6E,8Z,11Z,14Z)-eicosatetraenoate + H2O. The enzyme catalyses (12S)-hydroperoxy-(5Z,8Z,10E,14Z)-eicosatetraenoate = 12-oxo-(5Z,8Z,10E,14Z)-eicosatetraenoate + H2O. It catalyses the reaction (15S)-hydroperoxy-(5Z,8Z,11Z,13E)-eicosatetraenoate = 15-oxo-(5Z,8Z,11Z,13E)-eicosatetraenoate + H2O. The catalysed reaction is (13S)-hydroperoxy-(9Z,11E)-octadecadienoate = 13-oxo-(9Z,11E)-octadecadienoate + H2O. It carries out the reaction (5Z,8Z,11Z,14Z)-eicosatetraenoate + reduced [NADPH--hemoprotein reductase] + O2 = 13-hydroxy-(5Z,8Z,11Z,14Z)-eicosatetraenoate + oxidized [NADPH--hemoprotein reductase] + H2O + H(+). The enzyme catalyses (5Z,8Z,11Z,14Z)-eicosatetraenoate + reduced [NADPH--hemoprotein reductase] + O2 = 19-hydroxy-(5Z,8Z,11Z,14Z)-eicosatetraenoate + oxidized [NADPH--hemoprotein reductase] + H2O + H(+). It catalyses the reaction (9Z,12Z)-octadecadienoate + reduced [NADPH--hemoprotein reductase] + O2 = 11-hydroxy-(9Z,12Z)-octadecadienoate + oxidized [NADPH--hemoprotein reductase] + H2O + H(+). Its pathway is cofactor metabolism; retinol metabolism. The protein operates within steroid metabolism; cholesterol metabolism. It functions in the pathway lipid metabolism; arachidonate metabolism. Its function is as follows. A cytochrome P450 monooxygenase involved in the metabolism of various endogenous substrates, including fatty acids, steroid hormones and vitamins. Mechanistically, uses molecular oxygen inserting one oxygen atom into a substrate, and reducing the second into a water molecule, with two electrons provided by NADPH via cytochrome P450 reductase (NADPH--hemoprotein reductase). Catalyzes the hydroxylation of carbon-hydrogen bonds. Exhibits high catalytic activity for the formation of hydroxyestrogens from estrone (E1) and 17beta-estradiol (E2), namely 2-hydroxy E1 and E2. Metabolizes cholesterol toward 25-hydroxycholesterol, a physiological regulator of cellular cholesterol homeostasis. May act as a major enzyme for all-trans retinoic acid biosynthesis in the liver. Catalyzes two successive oxidative transformation of all-trans retinol to all-trans retinal and then to the active form all-trans retinoic acid. Primarily catalyzes stereoselective epoxidation of the last double bond of polyunsaturated fatty acids (PUFA), displaying a strong preference for the (R,S) stereoisomer. Catalyzes bisallylic hydroxylation and omega-1 hydroxylation of PUFA. May also participate in eicosanoids metabolism by converting hydroperoxide species into oxo metabolites (lipoxygenase-like reaction, NADPH-independent). Plays a role in the oxidative metabolism of xenobiotics. Catalyzes the N-hydroxylation of heterocyclic amines and the O-deethylation of phenacetin. Metabolizes caffeine via N3-demethylation. This Canis lupus familiaris (Dog) protein is Cytochrome P450 1A2 (CYP1A2).